A 558-amino-acid polypeptide reads, in one-letter code: MRRKNRLFILVVLLGIVLVVYYSQLNSLDLVEPVQSSSSGNGGCWSYYEGLTPGWLNDFYDVNQITPNPAKDVIELVTRIKIFFNCLQQVDGHNIQRLRDIEKKLFPYINFEKLETDESAFWHTTTRWNGEVYHASMLEFDPKNHQFLRSKPINFDTGLSFWENWLHTVTQSGSKGIVISASDVQLNETIRLLKVLRFIKNDYPIQIVHNADLSQDSMKSIIKYARSLDTAEYPAQELWFLNVHSLLNPKYSKKFTTYSNKWLALTFSSFEIPILMDSDTVPFVSIEKFYELEEFQKTGVLFFKDRVISDDLFESSELKILREIVYGCIGLDLEDESKIHEQVEDPVVAQVLENMFIKKYKHHLESGLVILHKGKHLFSMLTSIALQFSPIAEYFHGDKDFFWLGELLSNNRFTFHPVDASNIGQLGNVVSKESTGEFYQICSVQLSHTDRDGSLLWLNGGLNICKKTSWEYDYEHRQRLNDMFQNADELREYYASPVKLEGIIIPDTSISGWINSGECFLFNYCTLFKEGEFGKLIKFKEDEKLRLSQIVDIWNKDI.

Topologically, residues 1 to 6 (MRRKNR) are cytoplasmic. Residues 7–27 (LFILVVLLGIVLVVYYSQLNS) form a helical; Signal-anchor for type II membrane protein membrane-spanning segment. Residues 28-558 (LDLVEPVQSS…QIVDIWNKDI (531 aa)) are Lumenal-facing. Residue Asn-187 is glycosylated (N-linked (GlcNAc...) asparagine).

The protein belongs to the MNN1/MNT family.

The protein localises to the golgi apparatus membrane. Its pathway is protein modification; protein glycosylation. Functionally, mannosyltransferase involved in adding the 4th and 5th mannose residues of O-linked glycans. The sequence is that of Alpha-1,3-mannosyltransferase MNT2 (MNT2) from Saccharomyces cerevisiae (strain ATCC 204508 / S288c) (Baker's yeast).